The following is a 409-amino-acid chain: Putative competence-damage inducible protein (409 aa).

The protein belongs to the CinA family.

The polypeptide is Putative competence-damage inducible protein (Clostridium botulinum (strain 657 / Type Ba4)).